Here is a 455-residue protein sequence, read N- to C-terminus: uncharacterized protein (455 aa).

12 helical membrane passes run phenylalanine 19–glycine 39, isoleucine 63–serine 83, phenylalanine 106–methionine 126, phenylalanine 140–isoleucine 160, valine 173–phenylalanine 195, valine 200–valine 222, methionine 265–threonine 285, isoleucine 288–glycine 308, methionine 324–phenylalanine 344, leucine 348–methionine 368, alanine 388–leucine 408, and leucine 410–isoleucine 430.

It belongs to the multi antimicrobial extrusion (MATE) (TC 2.A.66.1) family.

The protein resides in the cell membrane. This is an uncharacterized protein from Bacillus subtilis (strain 168).